A 337-amino-acid chain; its full sequence is Protein ABHD13 (337 aa).

A helical; Signal-anchor for type II membrane protein membrane pass occupies residues phenylalanine 37–leucine 57. Active-site charge relay system residues include serine 193, aspartate 268, and histidine 298. Residue asparagine 299 is glycosylated (N-linked (GlcNAc...) asparagine).

This sequence belongs to the serine esterase family.

The protein resides in the membrane. In Mus musculus (Mouse), this protein is Protein ABHD13.